We begin with the raw amino-acid sequence, 164 residues long: CDP-archaeol synthase (164 aa).

The next 4 helical transmembrane spans lie at Leu3–Ala23, Tyr51–Leu71, Leu77–Ile97, and Leu122–Ile142.

This sequence belongs to the CDP-archaeol synthase family. It depends on Mg(2+) as a cofactor.

The protein localises to the cell membrane. It carries out the reaction 2,3-bis-O-(geranylgeranyl)-sn-glycerol 1-phosphate + CTP + H(+) = CDP-2,3-bis-O-(geranylgeranyl)-sn-glycerol + diphosphate. It participates in membrane lipid metabolism; glycerophospholipid metabolism. Its function is as follows. Catalyzes the formation of CDP-2,3-bis-(O-geranylgeranyl)-sn-glycerol (CDP-archaeol) from 2,3-bis-(O-geranylgeranyl)-sn-glycerol 1-phosphate (DGGGP) and CTP. This reaction is the third ether-bond-formation step in the biosynthesis of archaeal membrane lipids. The polypeptide is CDP-archaeol synthase (Pyrobaculum islandicum (strain DSM 4184 / JCM 9189 / GEO3)).